The following is a 170-amino-acid chain: NADH-quinone oxidoreductase subunit B (170 aa).

[4Fe-4S] cluster contacts are provided by cysteine 42, cysteine 43, cysteine 107, and cysteine 136.

The protein belongs to the complex I 20 kDa subunit family. In terms of assembly, NDH-1 is composed of 14 different subunits. Subunits NuoB, C, D, E, F, and G constitute the peripheral sector of the complex. [4Fe-4S] cluster is required as a cofactor.

The protein localises to the cell inner membrane. The enzyme catalyses a quinone + NADH + 5 H(+)(in) = a quinol + NAD(+) + 4 H(+)(out). Functionally, NDH-1 shuttles electrons from NADH, via FMN and iron-sulfur (Fe-S) centers, to quinones in the respiratory chain. The immediate electron acceptor for the enzyme in this species is believed to be ubiquinone. Couples the redox reaction to proton translocation (for every two electrons transferred, four hydrogen ions are translocated across the cytoplasmic membrane), and thus conserves the redox energy in a proton gradient. The protein is NADH-quinone oxidoreductase subunit B of Campylobacter concisus (strain 13826).